A 182-amino-acid chain; its full sequence is Functional amyloid subunit FapB (182 aa).

An N-terminal signal peptide occupies residues 1–18 (MTHSWLLLTVLGCSAAMA). One copy of the FapB_R1 repeat lies at 22-58 (NQALIDNAGKQYTGVLSVNQAAGNQHQQINSRAISLG). Residues 80–114 (SAAIQGSAFSNGNGILGVNQSAGANNQMINAVRIS) form a FapB_R2 repeat. The FapB_R3 repeat unit spans residues 150 to 180 (SDQAFTGSRGVVQVNQSAGVGNRMANTLGVT).

This sequence belongs to the FapB/FapC family. Forms fibrils in vitro; in the presence of FapA the fibrils are slightly narrower. A minor component of purified amyloid fibrils. Fibrils are resistant to boiling in 2% (weight/vol) SDS and require &gt;90% (vol/vol) formic acid to dissolve.

It is found in the fimbrium. The protein resides in the secreted. Functionally, a minor component of the functional amyloid in this bacterium. Probably nucleates fibril formation; FapB nucleates fibrillation its own, FapA inhibits FapB fibril elongation. Upon overexpression of the endogenous six-gene locus (fapA-fapF) in situ, cells form large clumps during liquid growth, make large amounts of biofilm and produce amyloid fibrils. Expression of the 6 gene operon in E.coli strain BL21(DE3) induces flocculation and biofilm formation with copious extracellular fibrils. The protein is Functional amyloid subunit FapB of Pseudomonas fluorescens.